Consider the following 74-residue polypeptide: Delta-actitoxin-Amc3a (74 aa).

Residues 1 to 19 form the signal peptide; sequence MNRLIILVVAAVFLGMASA. A propeptide spanning residues 20 to 24 is cleaved from the precursor; the sequence is EEDVL. A Hydroxyproline modification is found at proline 29. 3 disulfide bridges follow: cysteine 30/cysteine 70, cysteine 32/cysteine 60, and cysteine 53/cysteine 71. Glutamine 73 is modified (glutamine amide).

Belongs to the sea anemone sodium channel inhibitory toxin family. Type I subfamily.

The protein localises to the secreted. Its subcellular location is the nematocyst. In terms of biological role, inhibits voltage-gated sodium channels (Nav). In Antheopsis maculata (Sea anemone), this protein is Delta-actitoxin-Amc3a.